The sequence spans 163 residues: Protein-export protein SecB (163 aa).

It belongs to the SecB family. Homotetramer, a dimer of dimers. One homotetramer interacts with 1 SecA dimer.

Its subcellular location is the cytoplasm. In terms of biological role, one of the proteins required for the normal export of preproteins out of the cell cytoplasm. It is a molecular chaperone that binds to a subset of precursor proteins, maintaining them in a translocation-competent state. It also specifically binds to its receptor SecA. This Azotobacter vinelandii (strain DJ / ATCC BAA-1303) protein is Protein-export protein SecB.